A 384-amino-acid chain; its full sequence is MVRQLALACGLLAAVAVQAAPAEPAHPMVTEAPDASLLHKRATTCTFSGSEGASKVSKSKTACSTIYLSALAVPSGTTLDLKDLNDGTHVIFEGETTFGYEEWEGPLVSVSGTDITVEGASGAVLNGDGSRWWDGEGGNGGKTKPKFFAAHDLTSSTIKSIYIENSPVQVFSIDGATDLTLTDITIDNTDGDTDDLAANTDGFDIGESTDITITGAKVYNQDDCVAINSGENIYFSASVCSGGHGLSIGSVGGRDDNTVKNVTFYDVNVLKSQQAIRIKAIYGDTGSISDITYHEIAFSDATDYGIVIEQNYDDTSKTPTTGVPITDFTLENVIGTCADDDCTEVYIACGSGACSDWSWSSVSVTGGKVSSKCLNVPSGISCDL.

An N-terminal signal peptide occupies residues 1 to 19; the sequence is MVRQLALACGLLAAVAVQA. Positions 20 to 40 are excised as a propeptide; the sequence is APAEPAHPMVTEAPDASLLHK. A disulfide bond links Cys45 and Cys63. PbH1 repeat units lie at residues 176–207 and 208–229; these read ATDL…DIGE and STDI…AINS. Asp222 acts as the Proton donor in catalysis. A disulfide bridge connects residues Cys224 and Cys240. Residue His244 is part of the active site. 2 PbH1 repeats span residues 254-280 and 288-310; these read RDDN…RIKA and ISDI…VIEQ. An N-linked (GlcNAc...) asparagine glycan is attached at Asn261. 2 cysteine pairs are disulfide-bonded: Cys349–Cys354 and Cys373–Cys382.

This sequence belongs to the glycosyl hydrolase 28 family.

It is found in the secreted. It catalyses the reaction (1,4-alpha-D-galacturonosyl)n+m + H2O = (1,4-alpha-D-galacturonosyl)n + (1,4-alpha-D-galacturonosyl)m.. Functionally, involved in maceration and soft-rotting of plant tissue. Hydrolyzes the 1,4-alpha glycosidic bonds of de-esterified pectate in the smooth region of the plant cell wall. The polypeptide is Probable endopolygalacturonase C (pgaC) (Aspergillus aculeatus).